The following is a 224-amino-acid chain: Phosphoribosylformylglycinamidine synthase subunit PurQ (224 aa).

A Glutamine amidotransferase type-1 domain is found at 2-224; sequence KFAVIVFPGS…IVDNFVKGGV (223 aa). Residue C86 is the Nucleophile of the active site. Residues H194 and E196 contribute to the active site.

In terms of assembly, part of the FGAM synthase complex composed of 1 PurL, 1 PurQ and 2 PurS subunits.

It is found in the cytoplasm. The enzyme catalyses N(2)-formyl-N(1)-(5-phospho-beta-D-ribosyl)glycinamide + L-glutamine + ATP + H2O = 2-formamido-N(1)-(5-O-phospho-beta-D-ribosyl)acetamidine + L-glutamate + ADP + phosphate + H(+). It carries out the reaction L-glutamine + H2O = L-glutamate + NH4(+). It functions in the pathway purine metabolism; IMP biosynthesis via de novo pathway; 5-amino-1-(5-phospho-D-ribosyl)imidazole from N(2)-formyl-N(1)-(5-phospho-D-ribosyl)glycinamide: step 1/2. Part of the phosphoribosylformylglycinamidine synthase complex involved in the purines biosynthetic pathway. Catalyzes the ATP-dependent conversion of formylglycinamide ribonucleotide (FGAR) and glutamine to yield formylglycinamidine ribonucleotide (FGAM) and glutamate. The FGAM synthase complex is composed of three subunits. PurQ produces an ammonia molecule by converting glutamine to glutamate. PurL transfers the ammonia molecule to FGAR to form FGAM in an ATP-dependent manner. PurS interacts with PurQ and PurL and is thought to assist in the transfer of the ammonia molecule from PurQ to PurL. The protein is Phosphoribosylformylglycinamidine synthase subunit PurQ of Caldanaerobacter subterraneus subsp. tengcongensis (strain DSM 15242 / JCM 11007 / NBRC 100824 / MB4) (Thermoanaerobacter tengcongensis).